The primary structure comprises 424 residues: ATP synthase subunit beta, mitochondrial (424 aa).

The transit peptide at 1–60 (MFRLSSGLLKGGACASRSRIPQLGRSLYSTATSAGADKTQGKIHTVIGAVVDVQFNHGRL) directs the protein to the mitochondrion. ATP is bound by residues 187–194 (GGAGVGKT), 188–195 (GAGVGKTV), 219–220 (ER), and Tyr-374.

This sequence belongs to the ATPase alpha/beta chains family. In terms of assembly, F-type ATPases have 2 components, CF(1) - the catalytic core - and CF(0) - the membrane proton channel. CF(1) has five subunits: alpha(3), beta(3), gamma(1), delta(1), epsilon(1). CF(0) has three main subunits: a, b and c.

It localises to the mitochondrion. It is found in the mitochondrion inner membrane. The enzyme catalyses ATP + H2O + 4 H(+)(in) = ADP + phosphate + 5 H(+)(out). Functionally, ATP synthase subunit beta; part of the gene cluster that mediates the biosynthesis of citreoviridin, an inhibitor of the of F1-ATPase beta-subunit. Mitochondrial membrane ATP synthase (F(1)F(0) ATP synthase or Complex V) produces ATP from ADP in the presence of a proton gradient across the membrane which is generated by electron transport complexes of the respiratory chain. Whereas ctvA to ctvD constitute the core biosynthetic gene cluster, ctvE acts as a self-resistance gene. This is ATP synthase subunit beta, mitochondrial from Aspergillus terreus (strain NIH 2624 / FGSC A1156).